The sequence spans 293 residues: Cytidine deaminase 8 (293 aa).

CMP/dCMP-type deaminase domains lie at 20–151 and 181–293; these read FTPQ…LISQ and EHCN…LHCK. 61 to 63 is a substrate binding site; that stretch reads NVE. His74 provides a ligand contact to Zn(2+). Catalysis depends on Glu76, which acts as the Proton donor. 2 residues coordinate Zn(2+): Cys107 and Cys110.

Belongs to the cytidine and deoxycytidylate deaminase family. In terms of assembly, homodimer. The cofactor is Zn(2+).

The enzyme catalyses cytidine + H2O + H(+) = uridine + NH4(+). The catalysed reaction is 2'-deoxycytidine + H2O + H(+) = 2'-deoxyuridine + NH4(+). Functionally, this enzyme scavenges exogenous and endogenous cytidine and 2'-deoxycytidine for UMP synthesis. The polypeptide is Cytidine deaminase 8 (CDA8) (Arabidopsis thaliana (Mouse-ear cress)).